A 906-amino-acid chain; its full sequence is Disintegrin and metalloproteinase domain-containing protein 22 (906 aa).

A signal peptide spans 1–25 (MQAAVAVSVPFLLLCVLGTCPPARC). Positions 26–222 (GQAGDASLME…KFILKPRPKR (197 aa)) are excised as a propeptide. Asn-175 carries an N-linked (GlcNAc...) asparagine glycan. Residues 223-736 (SKRQLRRYPR…LSGNGVAGTN (514 aa)) are Extracellular-facing. A Peptidase M12B domain is found at 239–438 (KYIELMIVND…GGGACLFNKP (200 aa)). Cystine bridges form between Cys-349-Cys-433, Cys-392-Cys-417, Cys-394-Cys-401, Cys-447-Cys-477, Cys-458-Cys-474, Cys-460-Cys-466, Cys-473-Cys-494, Cys-485-Cys-491, Cys-490-Cys-516, Cys-503-Cys-523, Cys-510-Cys-542, Cys-535-Cys-547, Cys-554-Cys-605, Cys-569-Cys-635, Cys-583-Cys-593, Cys-600-Cys-663, and Cys-657-Cys-668. Positions 444-531 (PPECGNGFIE…QCAPNIHKMD (88 aa)) constitute a Disintegrin domain. Asn-519 carries an N-linked (GlcNAc...) asparagine glycan. An N-linked (GlcNAc...) asparagine glycan is attached at Asn-634. The N-linked (GlcNAc...) asparagine glycan is linked to Asn-675. In terms of domain architecture, EGF-like spans 675–712 (NFSTCLSSKEGTICSGNGVCSNELKCVCNRHWIGSDCN). Intrachain disulfides connect Cys-679–Cys-694, Cys-688–Cys-700, and Cys-702–Cys-711. A helical membrane pass occupies residues 737-757 (IIIGIIAGTILVLALILGITA). Residues 758–906 (WGYKNYREQR…QSARLWETSI (149 aa)) are Cytoplasmic-facing. The disordered stretch occupies residues 785–906 (YSDIPPGVST…QSARLWETSI (122 aa)). A compositionally biased stretch (low complexity) spans 793-810 (STNSASSSKKRSNGLSHS). Residue Ser-810 is modified to Phosphoserine. Positions 811–829 (WSERIPDTKHISDICENGR) are enriched in basic and acidic residues. The residue at position 834 (Ser-834) is a Phosphoserine. The span at 842-853 (NKKKIRGKRFRP) shows a compositional bias: basic residues. Ser-857, Ser-862, Ser-866, and Ser-870 each carry phosphoserine. Residues 862-877 (SPAKSPSSSTGSIASS) are compositionally biased toward low complexity.

Interacts with LGI1. Interacts with DLG4/PSD95. Also binds LGI4. Interacts with KCNA2 and DLG2. Interacts with ADAM11. Interacts (via C-terminus) with YWHAB/14-3-3 beta. Interacts (via C-terminus) with YWHAZ/14-3-3 zeta. The precursor is cleaved by a furin endopeptidase. As to expression, highly expressed in the brain and in some high-grade but not low-grade gliomas. Detected slightly or not at all in other tissues.

Its subcellular location is the cell membrane. It is found in the cell projection. The protein localises to the axon. Probable ligand for integrin in the brain. This is a non catalytic metalloprotease-like protein. Involved in regulation of cell adhesion and spreading and in inhibition of cell proliferation. Neuronal receptor for LGI1. This chain is Disintegrin and metalloproteinase domain-containing protein 22 (ADAM22), found in Homo sapiens (Human).